The sequence spans 250 residues: Pimeloyl-[acyl-carrier protein] methyl ester esterase (250 aa).

Residues Trp12, 71–72, and 138–142 contribute to the substrate site; these read SL and FVALQ. Ser71 serves as the catalytic Nucleophile. Active-site residues include Asp202 and His230. His230 contributes to the substrate binding site.

The protein belongs to the AB hydrolase superfamily. Carboxylesterase BioH family. As to quaternary structure, monomer.

Its subcellular location is the cytoplasm. The enzyme catalyses 6-carboxyhexanoyl-[ACP] methyl ester + H2O = 6-carboxyhexanoyl-[ACP] + methanol + H(+). It participates in cofactor biosynthesis; biotin biosynthesis. The physiological role of BioH is to remove the methyl group introduced by BioC when the pimeloyl moiety is complete. It allows to synthesize pimeloyl-ACP via the fatty acid synthetic pathway through the hydrolysis of the ester bonds of pimeloyl-ACP esters. The polypeptide is Pimeloyl-[acyl-carrier protein] methyl ester esterase (Aromatoleum aromaticum (strain DSM 19018 / LMG 30748 / EbN1) (Azoarcus sp. (strain EbN1))).